The chain runs to 299 residues: Acetylglutamate kinase (299 aa).

Residues G72–G73, R94, and N196 each bind substrate.

This sequence belongs to the acetylglutamate kinase family. ArgB subfamily.

It localises to the cytoplasm. It carries out the reaction N-acetyl-L-glutamate + ATP = N-acetyl-L-glutamyl 5-phosphate + ADP. Its pathway is amino-acid biosynthesis; L-arginine biosynthesis; N(2)-acetyl-L-ornithine from L-glutamate: step 2/4. Catalyzes the ATP-dependent phosphorylation of N-acetyl-L-glutamate. The protein is Acetylglutamate kinase of Burkholderia cenocepacia (strain ATCC BAA-245 / DSM 16553 / LMG 16656 / NCTC 13227 / J2315 / CF5610) (Burkholderia cepacia (strain J2315)).